Consider the following 318-residue polypeptide: MAVVVYAPASIGNVSVGFDVLGAAVSPIDGTLLGDRVMVKAGNEPFSLKTAGSFVAKLPSDPKENIVYDCWRVFARELDKKGLELKPLEMTLEKNMPIGSGLGSSACSIVAALDALNQFHANPLDEMELLALMGEMEGQISGGVHYDNVAPCYLGGLQLMLEELGIISQEVPCFDDWYWVMAYPGIKVSTAEARAILPSQYRRQDVIAHGRHLAGFIHACHSGQPELAAKMIKDVIAEPYREKLLPGFADARKYAASAGALATGISGSGPTLFSICKDQDVAQRVARWLEQNYVQNEEGFVHICRLDKKGSIVTGSEL.

97–107 (PIGSGLGSSAC) lines the ATP pocket.

This sequence belongs to the GHMP kinase family. Homoserine kinase subfamily.

It is found in the cytoplasm. It carries out the reaction L-homoserine + ATP = O-phospho-L-homoserine + ADP + H(+). It functions in the pathway amino-acid biosynthesis; L-threonine biosynthesis; L-threonine from L-aspartate: step 4/5. In terms of biological role, catalyzes the ATP-dependent phosphorylation of L-homoserine to L-homoserine phosphate. This chain is Homoserine kinase, found in Vibrio vulnificus (strain CMCP6).